A 346-amino-acid polypeptide reads, in one-letter code: Phosphoribosylformylglycinamidine cyclo-ligase (346 aa).

The protein belongs to the AIR synthase family.

Its subcellular location is the cytoplasm. It catalyses the reaction 2-formamido-N(1)-(5-O-phospho-beta-D-ribosyl)acetamidine + ATP = 5-amino-1-(5-phospho-beta-D-ribosyl)imidazole + ADP + phosphate + H(+). Its pathway is purine metabolism; IMP biosynthesis via de novo pathway; 5-amino-1-(5-phospho-D-ribosyl)imidazole from N(2)-formyl-N(1)-(5-phospho-D-ribosyl)glycinamide: step 2/2. The chain is Phosphoribosylformylglycinamidine cyclo-ligase from Vibrio campbellii (strain ATCC BAA-1116).